A 208-amino-acid polypeptide reads, in one-letter code: Small ribosomal subunit protein uS4 (208 aa).

Positions 99-165 (RRLDNVVFQL…PRLKEILSSL (67 aa)) constitute an S4 RNA-binding domain.

It belongs to the universal ribosomal protein uS4 family. In terms of assembly, part of the 30S ribosomal subunit. Contacts protein S5. The interaction surface between S4 and S5 is involved in control of translational fidelity.

Its function is as follows. One of the primary rRNA binding proteins, it binds directly to 16S rRNA where it nucleates assembly of the body of the 30S subunit. With S5 and S12 plays an important role in translational accuracy. In Desulfitobacterium hafniense (strain DSM 10664 / DCB-2), this protein is Small ribosomal subunit protein uS4.